The sequence spans 509 residues: ATP synthase subunit alpha (509 aa).

169–176 (GDRQTGKT) is an ATP binding site.

Belongs to the ATPase alpha/beta chains family. In terms of assembly, F-type ATPases have 2 components, CF(1) - the catalytic core - and CF(0) - the membrane proton channel. CF(1) has five subunits: alpha(3), beta(3), gamma(1), delta(1), epsilon(1). CF(0) has three main subunits: a(1), b(2) and c(9-12). The alpha and beta chains form an alternating ring which encloses part of the gamma chain. CF(1) is attached to CF(0) by a central stalk formed by the gamma and epsilon chains, while a peripheral stalk is formed by the delta and b chains.

The protein localises to the cell inner membrane. The catalysed reaction is ATP + H2O + 4 H(+)(in) = ADP + phosphate + 5 H(+)(out). Produces ATP from ADP in the presence of a proton gradient across the membrane. The alpha chain is a regulatory subunit. This Brucella abortus (strain S19) protein is ATP synthase subunit alpha.